A 93-amino-acid polypeptide reads, in one-letter code: Integration host factor subunit beta (93 aa).

It belongs to the bacterial histone-like protein family. In terms of assembly, heterodimer of an alpha and a beta chain.

Functionally, this protein is one of the two subunits of integration host factor, a specific DNA-binding protein that functions in genetic recombination as well as in transcriptional and translational control. The polypeptide is Integration host factor subunit beta (Idiomarina loihiensis (strain ATCC BAA-735 / DSM 15497 / L2-TR)).